We begin with the raw amino-acid sequence, 350 residues long: uncharacterized protein (350 aa).

The N-terminal stretch at 1-27 (MKNKKRVLIASSLSCAILLLSAATTQA) is a signal peptide. A disordered region spans residues 28-71 (NSAHKDSQDQNKKEHVDKSQQKEKRNVTNKDKNSTVPDDIGKNG). A compositionally biased stretch (basic and acidic residues) spans 30-60 (AHKDSQDQNKKEHVDKSQQKEKRNVTNKDKN).

The protein belongs to the aerolysin family.

This is an uncharacterized protein from Staphylococcus aureus (strain MSSA476).